The following is a 136-amino-acid chain: Basic phospholipase A2 Tgc-K49 (136 aa).

Residues methionine 1–glycine 15 form the signal peptide. 7 disulfides stabilise this stretch: cysteine 41–cysteine 130, cysteine 43–cysteine 59, cysteine 58–cysteine 110, cysteine 64–cysteine 136, cysteine 65–cysteine 103, cysteine 72–cysteine 96, and cysteine 90–cysteine 101. The active site involves histidine 62. The active site involves aspartate 104.

This sequence belongs to the phospholipase A2 family. Group II subfamily. K49 sub-subfamily. Expressed by the venom gland.

It is found in the secreted. The catalysed reaction is a 1,2-diacyl-sn-glycero-3-phosphocholine + H2O = a 1-acyl-sn-glycero-3-phosphocholine + a fatty acid + H(+). In terms of biological role, PLA2 catalyzes the calcium-dependent hydrolysis of the 2-acyl groups in 3-sn-phosphoglycerides. This chain is Basic phospholipase A2 Tgc-K49, found in Trimeresurus gracilis (Kikuchi habu).